The chain runs to 381 residues: tRNA-specific 2-thiouridylase MnmA (381 aa).

Residues 9 to 16 and Met-35 contribute to the ATP site; that span reads GMSGGVDS. The interaction with target base in tRNA stretch occupies residues 95–97; that stretch reads NPD. Catalysis depends on Cys-100, which acts as the Nucleophile. Cys-100 and Cys-196 are disulfide-bonded. Gly-124 provides a ligand contact to ATP. Residues 146-148 are interaction with tRNA; it reads KDQ. Residue Cys-196 is the Cysteine persulfide intermediate of the active site. The segment at 308 to 309 is interaction with tRNA; it reads RY.

It belongs to the MnmA/TRMU family.

It localises to the cytoplasm. It carries out the reaction S-sulfanyl-L-cysteinyl-[protein] + uridine(34) in tRNA + AH2 + ATP = 2-thiouridine(34) in tRNA + L-cysteinyl-[protein] + A + AMP + diphosphate + H(+). In terms of biological role, catalyzes the 2-thiolation of uridine at the wobble position (U34) of tRNA, leading to the formation of s(2)U34. The chain is tRNA-specific 2-thiouridylase MnmA from Paraburkholderia xenovorans (strain LB400).